The chain runs to 321 residues: Ribose-phosphate pyrophosphokinase 1 (321 aa).

Residues Asp-131, His-133, Asp-142, and Asp-146 each contribute to the Mg(2+) site.

This sequence belongs to the ribose-phosphate pyrophosphokinase family.

The enzyme catalyses D-ribose 5-phosphate + ATP = 5-phospho-alpha-D-ribose 1-diphosphate + AMP + H(+). This chain is Ribose-phosphate pyrophosphokinase 1 (PRS1), found in Candida albicans (Yeast).